The sequence spans 241 residues: Chaperone protein HifB (241 aa).

Positions 1-27 (MGKTMFKKTLLFFTALFFAALCAFSAN) are cleaved as a signal peptide.

It belongs to the periplasmic pilus chaperone family.

It is found in the periplasm. Functionally, mediates assembly of pili by forming soluble multimeric complexes with pili subunits as an intermediate step in the assembly process. This protein is involved in type B pili (HifA) assembly. This is Chaperone protein HifB (hifB) from Haemophilus influenzae.